The primary structure comprises 276 residues: Ribosomal RNA small subunit methyltransferase A (276 aa).

S-adenosyl-L-methionine is bound by residues Asn-27, Leu-29, Gly-54, Glu-75, Asp-101, and Asn-123.

Belongs to the class I-like SAM-binding methyltransferase superfamily. rRNA adenine N(6)-methyltransferase family. RsmA subfamily.

The protein localises to the cytoplasm. The enzyme catalyses adenosine(1518)/adenosine(1519) in 16S rRNA + 4 S-adenosyl-L-methionine = N(6)-dimethyladenosine(1518)/N(6)-dimethyladenosine(1519) in 16S rRNA + 4 S-adenosyl-L-homocysteine + 4 H(+). In terms of biological role, specifically dimethylates two adjacent adenosines (A1518 and A1519) in the loop of a conserved hairpin near the 3'-end of 16S rRNA in the 30S particle. May play a critical role in biogenesis of 30S subunits. In Bartonella quintana (strain Toulouse) (Rochalimaea quintana), this protein is Ribosomal RNA small subunit methyltransferase A.